Consider the following 793-residue polypeptide: Netrin-B (793 aa).

The first 22 residues, 1–22 (MVRATGTRMGLLLPIILALAIG), serve as a signal peptide directing secretion. The Laminin N-terminal domain maps to 39–303 (KPRKCLPSFV…NLQDNDSADA (265 aa)). Residues Asn103, Asn125, and Asn298 are each glycosylated (N-linked (GlcNAc...) asparagine). The tract at residues 332–378 (SVVKRQGKHKGSAYEKHYQSKLAATTPPQQPPKVTPPGKVTPPSTAA) is disordered. Residues 367–378 (PPGKVTPPSTAA) are compositionally biased toward low complexity. 15 disulfides stabilise this stretch: Cys405–Cys414, Cys407–Cys461, Cys463–Cys472, Cys475–Cys495, Cys498–Cys507, Cys500–Cys525, Cys528–Cys537, Cys540–Cys558, Cys561–Cys573, Cys563–Cys580, Cys582–Cys591, Cys594–Cys608, Cys649–Cys738, Cys652–Cys740, and Cys665–Cys792. Laminin EGF-like domains lie at 405-497 (CKCN…ECKM), 498-560 (CQCN…VCKR), and 561-610 (CDCH…PCIK). Residues 420-446 (SGSGTALSDQDDGQDEDTPSAPSLANH) form a disordered region. The span at 428–437 (DQDDGQDEDT) shows a compositional bias: acidic residues. An NTR domain is found at 649–792 (CGKCKASPKK…KRFQRRARKC (144 aa)). N-linked (GlcNAc...) asparagine glycosylation occurs at Asn746.

As to quaternary structure, binds to unc-5 and fra receptors. In terms of tissue distribution, at 24 hr after puparium formation (APF), detected in the most anterior (oldest) L3, L4 and L5 lamina neurons (at protein level). At 48 hr APF, expressed in all L3, L4 and L5 neurons with slightly higher expression in the L3 neurons (at protein level). At the midline of developing CNS and in different subsets of neurons, muscles, and epidermal patches.

Its subcellular location is the secreted. It localises to the extracellular space. It is found in the extracellular matrix. The protein resides in the cytoplasm. The protein localises to the perinuclear region. In terms of biological role, netrins control guidance of CNS commissural axons and peripheral motor axons. Its association with either fra or unc-5 receptors will lead to axon attraction or repulsion, respectively. While short-range repulsion requires both fra and unc-5 receptors, long-range repulsion only requires unc-5. This Drosophila melanogaster (Fruit fly) protein is Netrin-B (NetB).